A 68-amino-acid polypeptide reads, in one-letter code: DNA gyrase inhibitor YacG (68 aa).

The Zn(2+) site is built by Cys-12, Cys-15, Cys-30, and Cys-34. The tract at residues Lys-48–Asp-68 is disordered.

It belongs to the DNA gyrase inhibitor YacG family. Interacts with GyrB. The cofactor is Zn(2+).

Functionally, inhibits all the catalytic activities of DNA gyrase by preventing its interaction with DNA. Acts by binding directly to the C-terminal domain of GyrB, which probably disrupts DNA binding by the gyrase. This is DNA gyrase inhibitor YacG from Acinetobacter baylyi (strain ATCC 33305 / BD413 / ADP1).